The chain runs to 638 residues: DNA repair protein rhp41 (638 aa).

This sequence belongs to the XPC family.

It is found in the nucleus. Has a role in the nucleotide excision repair (NER) pathway. Acts in both transcription-coupled repair (TCR) which removes damage from the transcribed strand of active genes and in global genome repair (GGR) which removes damage in untranscribed DNA. Involved in the repair of UV-induced damages where it is involved in the removal of cyclobutane pyrimidine dimers (CPDs). This is DNA repair protein rhp41 (rhp41) from Schizosaccharomyces pombe (strain 972 / ATCC 24843) (Fission yeast).